A 635-amino-acid chain; its full sequence is Biosynthetic arginine decarboxylase (635 aa).

Lys-100 bears the N6-(pyridoxal phosphate)lysine mark. 282-292 contacts substrate; the sequence is LDIGGGLGVDY.

It belongs to the Orn/Lys/Arg decarboxylase class-II family. SpeA subfamily. The cofactor is Mg(2+). It depends on pyridoxal 5'-phosphate as a cofactor.

It catalyses the reaction L-arginine + H(+) = agmatine + CO2. It functions in the pathway amine and polyamine biosynthesis; agmatine biosynthesis; agmatine from L-arginine: step 1/1. Catalyzes the biosynthesis of agmatine from arginine. This chain is Biosynthetic arginine decarboxylase, found in Geobacter sp. (strain M21).